We begin with the raw amino-acid sequence, 135 residues long: uncharacterized protein (135 aa).

Positions 4–129 (SIVHIALVVN…YGNLWDLLQL (126 aa)) constitute a VOC domain.

The protein to B.subtilis YwkD.

This is an uncharacterized protein from Shewanella frigidimarina (strain NCIMB 400).